Reading from the N-terminus, the 299-residue chain is Cuticle collagen 34 (299 aa).

The interval 105-282 (PGPAGTPGKP…GSPGERGICP (178 aa)) is disordered. A compositionally biased stretch (pro residues) spans 129–162 (PGRPPQQPCEPITPPPCKPCPQGPPGPPGPPGPP). Low complexity predominate over residues 164–181 (DSGEPGSPGLPGQDAAPG). Pro residues-rich tracts occupy residues 182–195 (EPGP…PGAP) and 215–233 (PGEP…PGSP). A triple-helical region region spans residues 216-278 (GEPGPPGEAG…AGPPGSPGER (63 aa)). The segment covering 251 to 263 (NGPDGQPGADGNP) has biased composition (low complexity). A compositionally biased stretch (pro residues) spans 265–274 (APGPAGPPGS).

It belongs to the cuticular collagen family. In terms of assembly, collagen polypeptide chains are complexed within the cuticle by disulfide bonds and other types of covalent cross-links.

Functionally, nematode cuticles are composed largely of collagen-like proteins. The cuticle functions both as an exoskeleton and as a barrier to protect the worm from its environment. This is Cuticle collagen 34 (col-34) from Caenorhabditis elegans.